The primary structure comprises 319 residues: Formimidoylglutamase (319 aa).

Mn(2+)-binding residues include Asn-127, Asp-150, His-152, Asp-154, Asp-242, and Asp-244.

It belongs to the arginase family. Mn(2+) is required as a cofactor.

It carries out the reaction N-formimidoyl-L-glutamate + H2O = formamide + L-glutamate. It participates in amino-acid degradation; L-histidine degradation into L-glutamate; L-glutamate from N-formimidoyl-L-glutamate (hydrolase route): step 1/1. Its function is as follows. Catalyzes the conversion of N-formimidoyl-L-glutamate to L-glutamate and formamide. The protein is Formimidoylglutamase of Bacillus subtilis (strain 168).